Here is a 375-residue protein sequence, read N- to C-terminus: 2-isopropylmalate synthase (375 aa).

Positions 1 to 124 (GRTSIDNLCR…FTNIKHNELY (124 aa)) constitute a Pyruvate carboxyltransferase domain. The Mn(2+) site is built by His59, His61, and Asn95. A regulatory domain region spans residues 250–375 (QLKYFSIHSG…SKIKNIKNKK (126 aa)).

Belongs to the alpha-IPM synthase/homocitrate synthase family. LeuA type 1 subfamily. As to quaternary structure, homodimer.

It is found in the cytoplasm. The catalysed reaction is 3-methyl-2-oxobutanoate + acetyl-CoA + H2O = (2S)-2-isopropylmalate + CoA + H(+). The protein operates within amino-acid biosynthesis; L-leucine biosynthesis; L-leucine from 3-methyl-2-oxobutanoate: step 1/4. In terms of biological role, catalyzes the condensation of the acetyl group of acetyl-CoA with 3-methyl-2-oxobutanoate (2-ketoisovalerate) to form 3-carboxy-3-hydroxy-4-methylpentanoate (2-isopropylmalate). The chain is 2-isopropylmalate synthase from Buchnera aphidicola subsp. Thelaxes suberi.